Consider the following 638-residue polypeptide: 1-deoxy-D-xylulose-5-phosphate synthase (638 aa).

Thiamine diphosphate is bound by residues H72 and 113 to 115 (GHA). D144 contacts Mg(2+). Residues 145–146 (GA), N174, Y289, and E372 contribute to the thiamine diphosphate site. N174 contacts Mg(2+).

This sequence belongs to the transketolase family. DXPS subfamily. Homodimer. Requires Mg(2+) as cofactor. Thiamine diphosphate serves as cofactor.

It carries out the reaction D-glyceraldehyde 3-phosphate + pyruvate + H(+) = 1-deoxy-D-xylulose 5-phosphate + CO2. It participates in metabolic intermediate biosynthesis; 1-deoxy-D-xylulose 5-phosphate biosynthesis; 1-deoxy-D-xylulose 5-phosphate from D-glyceraldehyde 3-phosphate and pyruvate: step 1/1. In terms of biological role, catalyzes the acyloin condensation reaction between C atoms 2 and 3 of pyruvate and glyceraldehyde 3-phosphate to yield 1-deoxy-D-xylulose-5-phosphate (DXP). The polypeptide is 1-deoxy-D-xylulose-5-phosphate synthase (Gloeobacter violaceus (strain ATCC 29082 / PCC 7421)).